The sequence spans 109 residues: Large ribosomal subunit protein uL22 (109 aa).

This sequence belongs to the universal ribosomal protein uL22 family. Part of the 50S ribosomal subunit.

Functionally, this protein binds specifically to 23S rRNA; its binding is stimulated by other ribosomal proteins, e.g. L4, L17, and L20. It is important during the early stages of 50S assembly. It makes multiple contacts with different domains of the 23S rRNA in the assembled 50S subunit and ribosome. Its function is as follows. The globular domain of the protein is located near the polypeptide exit tunnel on the outside of the subunit, while an extended beta-hairpin is found that lines the wall of the exit tunnel in the center of the 70S ribosome. This Dehalococcoides mccartyi (strain ATCC BAA-2266 / KCTC 15142 / 195) (Dehalococcoides ethenogenes (strain 195)) protein is Large ribosomal subunit protein uL22.